The primary structure comprises 387 residues: EARP and GARP complex-interacting protein 1 (387 aa).

Residue Met-1 is modified to N-acetylmethionine. WD repeat units follow at residues 4 to 48 (DAPV…IIDF), 55 to 101 (INKN…VWRM), 124 to 164 (ELLC…LWDL), 172 to 214 (VLAS…GWDT), 219 to 258 (QIYC…FWDT), and 263 to 302 (EPVK…LSNM). Positions 310-335 (FGHLVDDDDISDQEDHRSEEKSKEPL) are disordered. Ser-320 carries the post-translational modification Phosphoserine. Basic and acidic residues predominate over residues 322–335 (QEDHRSEEKSKEPL). The WD 7 repeat unit spans residues 338-379 (NVIATYEEHEDSVYAVDWSSADPWLFASLSYDGRLVINRVPR).

Belongs to the WD repeat EIPR1 family. Interacts with two multisubunit tethering complexes: EARP composed of VPS50, VPS51, VPS52 and VPS53 subunits and GARP complex composed of VPS51, VPS52, VPS53 and VPS54 subunits. Interacts with SNAP29.

Its subcellular location is the golgi apparatus. The protein resides in the trans-Golgi network. Acts as a component of endosomal retrieval machinery that is involved in protein transport from early endosomes to either recycling endosomes or the trans-Golgi network. Mediates the recruitment of Golgi-associated retrograde protein (GARP) complex to the trans-Golgi network and controls early endosome-to-Golgi transport of internalized protein. Promotes the recycling of internalized transferrin receptor (TFRC) to the plasma membrane through interaction with endosome-associated recycling protein (EARP) complex. Controls proper insulin distribution and secretion, and retention of cargo in mature dense core vesicles. Required for the stability of the endosome-associated retrograde protein (EARP) complex subunits and for proper localization and association of EARP with membranes. The chain is EARP and GARP complex-interacting protein 1 from Homo sapiens (Human).